Consider the following 224-residue polypeptide: Mannose-specific lectin 3 (224 aa).

Bulb-type lectin domains follow at residues 2–111 and 117–222; these read NNVL…PAAA and RNVL…VWST. Disulfide bonds link Cys-30/Cys-52 and Cys-145/Cys-170.

In terms of assembly, heterotetramer of 2 domain 1 and 2 domain 2 chains arranged as a dimer of domain 1/domain 2 heterodimers.

Functionally, mannose-specific lectin. Has weak agglutinating activity towards trypsin-treated erythrocytes from rabbit but not from human. This Crocus vernus (Dutch crocus) protein is Mannose-specific lectin 3.